A 309-amino-acid chain; its full sequence is Probable inactive poly [ADP-ribose] polymerase SRO5 (309 aa).

The PARP catalytic domain occupies 28-255 (CDSSSDRSFA…AFPVLIKALS (228 aa)). In terms of domain architecture, RST spans 238-309 (KRLRSPWMAF…IKACGHKVQH (72 aa)).

As to quaternary structure, interacts with dehydration-responsive DREB2 proteins and a number of transcription factors belonging to several protein families.

Its subcellular location is the nucleus matrix. Probable inactive ADP-ribosyltransferase that may be involved in stress and developmental responses. This Arabidopsis thaliana (Mouse-ear cress) protein is Probable inactive poly [ADP-ribose] polymerase SRO5 (SRO5).